A 235-amino-acid chain; its full sequence is Large ribosomal subunit protein bL25 (235 aa).

The tract at residues 201-235 is disordered; sequence PVAEAKGKGKAAKPAATAKPAAAAAKPAAKPKAKK. The segment covering 212–228 has biased composition (low complexity); it reads AKPAATAKPAAAAAKPA.

Belongs to the bacterial ribosomal protein bL25 family. CTC subfamily. In terms of assembly, part of the 50S ribosomal subunit; part of the 5S rRNA/L5/L18/L25 subcomplex. Contacts the 5S rRNA. Binds to the 5S rRNA independently of L5 and L18.

Its function is as follows. This is one of the proteins that binds to the 5S RNA in the ribosome where it forms part of the central protuberance. In Verminephrobacter eiseniae (strain EF01-2), this protein is Large ribosomal subunit protein bL25.